The following is a 372-amino-acid chain: NADH-quinone oxidoreductase subunit H (372 aa).

The next 8 membrane-spanning stretches (helical) occupy residues 34 to 54 (LPLGLLVIAAIPLVFIALYAL), 106 to 126 (FLFVIGPGVLFVGSFLAFAVL), 139 to 159 (VGLFYAIGIVALEVVGILAAG), 178 to 198 (IVSYEIPAAIALLCGAMMAGT), 217 to 237 (FFLFQSPIAWLPFLIYFIASL), 269 to 289 (VIFLAEYGSMFMVSAIIAIVF), 313 to 333 (VWGAFWIIMKGFFFIFVQMWL), and 352 to 372 (VLTPFAFVSFVLTAIWMIYVP).

Belongs to the complex I subunit 1 family. NDH-1 is composed of 14 different subunits. Subunits NuoA, H, J, K, L, M, N constitute the membrane sector of the complex.

Its subcellular location is the cell inner membrane. It catalyses the reaction a quinone + NADH + 5 H(+)(in) = a quinol + NAD(+) + 4 H(+)(out). Functionally, NDH-1 shuttles electrons from NADH, via FMN and iron-sulfur (Fe-S) centers, to quinones in the respiratory chain. The immediate electron acceptor for the enzyme in this species is believed to be ubiquinone. Couples the redox reaction to proton translocation (for every two electrons transferred, four hydrogen ions are translocated across the cytoplasmic membrane), and thus conserves the redox energy in a proton gradient. This subunit may bind ubiquinone. This is NADH-quinone oxidoreductase subunit H from Chlorobium luteolum (strain DSM 273 / BCRC 81028 / 2530) (Pelodictyon luteolum).